The following is a 696-amino-acid chain: Glycosyltransferase GlyA (696 aa).

The segment at 1–301 is GT2 domain; that stretch reads MLVDDKITVI…NQLSRQEESE (301 aa). The GT8 domain stretch occupies residues 302–556; that stretch reads KKAIVLAANY…TELGQNHHLH (255 aa). UDP contacts are provided by residues 308–313 and 399–400; these read AANYGY and DC. 3 residues coordinate Mn(2+): D399, D401, and H518. UDP is bound at residue 518-524; sequence HYLSHRK.

In the N-terminal section; belongs to the glycosyltransferase 2 family. The protein in the central section; belongs to the glycosyltransferase 8 family.

Its pathway is protein modification; protein glycosylation. Functionally, involved in the polymorphic O-glycosylation of the serine-rich repeat protein PsrP. Catalyzes the fourth step in glycosylation of PsrP in this bacteria. Can transfer the sugar from UDP-galactose to the terminal sugar moiety of PsrP-GlcNAc-Glc-Gal or of PsrP-GlcNAc-Glc-Glc (using truncated substrates with the PsrP SSR1 domain). Has hydrolytic activity against UDP-galactose and to a lesser extent against UDP-glucose. The polypeptide is Glycosyltransferase GlyA (Streptococcus pneumoniae serotype 4 (strain ATCC BAA-334 / TIGR4)).